A 479-amino-acid chain; its full sequence is MSKILTTASGAPVADNQNSRSAGPRGPLLLDDFHLIEKLAHFNRENIPERRVHAKGSGAYGTFTVTRDITGYTSAKLFEQVGKQTETFLRFSTVGGERGSADTERDPRGFAVKFYTEEGNWDIVGNNTPVFFIRDPLKFPDFIHTQKRHPQSNLKNAQIFWDSWSHSPEALHQVTILFSDRGIPDGYRHMHGFGSHTYSLINAQGERTWVKWHFKTQQGIKNLAPADAARLAGTDPDYAQRDLFEAIERGDYPRWTVCIQVMSEAEAASRDENPFDVTKTWSQKDYPLIEVGVLELNRNPLNYFAEVEQAAFGPSNMVPGVGLSPDRMLQGRVFAYADAHRYRVGTNHQQLPVNAPRCPVNSYQRDGSMATGSYGSAPNYEPNSYAAAPKQSPRHAEPALALNGSADRYDHREDADYYSHAGALFRLMSDEQKALLISNIAGTMAGVSENVIQRQLQYFFKADPAYGEGIAKGLGINLA.

The span at 1–21 (MSKILTTASGAPVADNQNSRS) shows a compositional bias: polar residues. Positions 1–25 (MSKILTTASGAPVADNQNSRSAGPR) are disordered. Active-site residues include His-53 and Asn-126. A heme-binding site is contributed by Tyr-336. Residues 350 to 376 (QLPVNAPRCPVNSYQRDGSMATGSYGS) form a disordered region. A compositionally biased stretch (polar residues) spans 361 to 376 (NSYQRDGSMATGSYGS).

Belongs to the catalase family. The cofactor is heme.

The enzyme catalyses 2 H2O2 = O2 + 2 H2O. Its activity is regulated as follows. Activated by peroxide. Its function is as follows. The major expressed catalase protein in strain Corvallis in stationary phase. Decomposes hydrogen peroxide into water and oxygen; serves to protect cells from the toxic effects of hydrogen peroxide. The polypeptide is Catalase A (katA) (Pseudomonas putida (Arthrobacter siderocapsulatus)).